Here is a 136-residue protein sequence, read N- to C-terminus: Galectin-7 (136 aa).

The region spanning 6–136 (HKTPLPQGVR…DVQLHSVKIF (131 aa)) is the Galectin domain. 70–76 (WGREERG) contacts a beta-D-galactoside.

In terms of assembly, monomer.

The protein localises to the cytoplasm. It is found in the nucleus. The protein resides in the secreted. Could be involved in cell-cell and/or cell-matrix interactions necessary for normal growth control. Pro-apoptotic protein that functions intracellularly upstream of JNK activation and cytochrome c release. The protein is Galectin-7 (Lgals7) of Rattus norvegicus (Rat).